The following is a 655-amino-acid chain: Very long-chain specific acyl-CoA dehydrogenase, mitochondrial (655 aa).

Residues 1-40 constitute a mitochondrion transit peptide; that stretch reads MRAARMAQSTGRQLLRLRGVSSWPGELLGQPRPGPARRPY. Residues 22–66 are disordered; that stretch reads SWPGELLGQPRPGPARRPYASGVAQAAVDQSDSQPSEASTREKRA. A catalytic region spans residues 41–482; it reads ASGVAQAAVD…ALQGCMDKGK (442 aa). Residues 49–59 are compositionally biased toward polar residues; that stretch reads VDQSDSQPSEA. The residue at position 71 (Lys-71) is an N6-acetyllysine; alternate. Position 71 is an N6-succinyllysine; alternate (Lys-71). Lys-195 carries the post-translational modification N6-succinyllysine. FAD is bound at residue 214–223; the sequence is FCLTEPSSGS. Cys-237 bears the S-nitrosocysteine mark. Residue Lys-239 is modified to N6-acetyllysine; alternate. Lys-239 bears the N6-succinyllysine; alternate mark. 249–251 contributes to the FAD binding site; the sequence is WIS. Lys-276 and Lys-278 each carry N6-acetyllysine; alternate. Residues Lys-276 and Lys-278 each carry the N6-succinyllysine; alternate modification. An N6-acetyllysine modification is found at Lys-298. Lys-331 bears the N6-acetyllysine; alternate mark. At Lys-331 the chain carries N6-succinyllysine; alternate. Residue Lys-372 is modified to N6-succinyllysine. 461–463 serves as a coordination point for substrate; sequence FEG. Catalysis depends on Glu-462, which acts as the Proton acceptor. 464–466 serves as a coordination point for FAD; that stretch reads TND. N6-acetyllysine; alternate is present on Lys-482. Lys-482 carries the N6-succinyllysine; alternate modification. Residues 483–516 are membrane-anchoring; it reads ELSGLGNALKNPFGNAGLLLGEAGKQLRRRAGLG. Phosphoserine occurs at positions 517 and 522. Lys-550 carries the post-translational modification N6-acetyllysine. Lys-556 bears the N6-acetyllysine; alternate mark. Residue Lys-556 is modified to N6-succinyllysine; alternate. Gln-562 contributes to the FAD binding site. An N6-succinyllysine modification is found at Lys-639.

This sequence belongs to the acyl-CoA dehydrogenase family. In terms of assembly, homodimer. Homodimerizes after import into the mitochondrion. Requires FAD as cofactor. Post-translationally, S-nitrosylation at Cys-237 in liver improves catalytic efficiency.

It is found in the mitochondrion inner membrane. The catalysed reaction is a very-long-chain 2,3-saturated fatty acyl-CoA + oxidized [electron-transfer flavoprotein] + H(+) = a very-long-chain (2E)-enoyl-CoA + reduced [electron-transfer flavoprotein]. The enzyme catalyses dodecanoyl-CoA + oxidized [electron-transfer flavoprotein] + H(+) = (2E)-dodecenoyl-CoA + reduced [electron-transfer flavoprotein]. It catalyses the reaction tetradecanoyl-CoA + oxidized [electron-transfer flavoprotein] + H(+) = (2E)-tetradecenoyl-CoA + reduced [electron-transfer flavoprotein]. It carries out the reaction oxidized [electron-transfer flavoprotein] + hexadecanoyl-CoA + H(+) = (2E)-hexadecenoyl-CoA + reduced [electron-transfer flavoprotein]. The catalysed reaction is octadecanoyl-CoA + oxidized [electron-transfer flavoprotein] + H(+) = (2E)-octadecenoyl-CoA + reduced [electron-transfer flavoprotein]. The enzyme catalyses eicosanoyl-CoA + oxidized [electron-transfer flavoprotein] + H(+) = (2E)-eicosenoyl-CoA + reduced [electron-transfer flavoprotein]. It catalyses the reaction docosanoyl-CoA + oxidized [electron-transfer flavoprotein] + H(+) = (2E)-docosenoyl-CoA + reduced [electron-transfer flavoprotein]. It carries out the reaction tetracosanoyl-CoA + oxidized [electron-transfer flavoprotein] + H(+) = (2E)-tetracosenoyl-CoA + reduced [electron-transfer flavoprotein]. It functions in the pathway lipid metabolism; mitochondrial fatty acid beta-oxidation. Its function is as follows. Very long-chain specific acyl-CoA dehydrogenase is one of the acyl-CoA dehydrogenases that catalyze the first step of mitochondrial fatty acid beta-oxidation, an aerobic process breaking down fatty acids into acetyl-CoA and allowing the production of energy from fats. The first step of fatty acid beta-oxidation consists in the removal of one hydrogen from C-2 and C-3 of the straight-chain fatty acyl-CoA thioester, resulting in the formation of trans-2-enoyl-CoA. Among the different mitochondrial acyl-CoA dehydrogenases, very long-chain specific acyl-CoA dehydrogenase acts specifically on acyl-CoAs with saturated 12 to 24 carbons long primary chains. This is Very long-chain specific acyl-CoA dehydrogenase, mitochondrial from Bos taurus (Bovine).